The following is a 156-amino-acid chain: ATP synthase subunit b (156 aa).

Residues 11-31 (AIAFILFVWFCMKYVWPPLMA) traverse the membrane as a helical segment.

The protein belongs to the ATPase B chain family. As to quaternary structure, F-type ATPases have 2 components, F(1) - the catalytic core - and F(0) - the membrane proton channel. F(1) has five subunits: alpha(3), beta(3), gamma(1), delta(1), epsilon(1). F(0) has three main subunits: a(1), b(2) and c(10-14). The alpha and beta chains form an alternating ring which encloses part of the gamma chain. F(1) is attached to F(0) by a central stalk formed by the gamma and epsilon chains, while a peripheral stalk is formed by the delta and b chains.

It is found in the cell inner membrane. Its function is as follows. F(1)F(0) ATP synthase produces ATP from ADP in the presence of a proton or sodium gradient. F-type ATPases consist of two structural domains, F(1) containing the extramembraneous catalytic core and F(0) containing the membrane proton channel, linked together by a central stalk and a peripheral stalk. During catalysis, ATP synthesis in the catalytic domain of F(1) is coupled via a rotary mechanism of the central stalk subunits to proton translocation. Functionally, component of the F(0) channel, it forms part of the peripheral stalk, linking F(1) to F(0). The sequence is that of ATP synthase subunit b from Salmonella gallinarum (strain 287/91 / NCTC 13346).